The chain runs to 318 residues: Ornithine carbamoyltransferase (318 aa).

Residues 63 to 66 (STRT), Q90, R114, and 141 to 144 (HPCQ) contribute to the carbamoyl phosphate site. L-ornithine is bound by residues N172, D235, and 239-240 (SM). Residues 275–276 (CL) and R303 contribute to the carbamoyl phosphate site.

This sequence belongs to the aspartate/ornithine carbamoyltransferase superfamily. OTCase family.

The protein resides in the cytoplasm. It catalyses the reaction carbamoyl phosphate + L-ornithine = L-citrulline + phosphate + H(+). Its pathway is amino-acid biosynthesis; L-arginine biosynthesis; L-arginine from L-ornithine and carbamoyl phosphate: step 1/3. Reversibly catalyzes the transfer of the carbamoyl group from carbamoyl phosphate (CP) to the N(epsilon) atom of ornithine (ORN) to produce L-citrulline. This Parasynechococcus marenigrum (strain WH8102) protein is Ornithine carbamoyltransferase.